Reading from the N-terminus, the 138-residue chain is Large ribosomal subunit protein bL17 (138 aa).

The interval 118-138 (RDEDAKGKDSGPSQDGAAEAA) is disordered.

The protein belongs to the bacterial ribosomal protein bL17 family. In terms of assembly, part of the 50S ribosomal subunit. Contacts protein L32.

This is Large ribosomal subunit protein bL17 from Rhodopseudomonas palustris (strain HaA2).